A 538-amino-acid chain; its full sequence is Chaperonin GroEL (538 aa).

Residues 29–32 (TLGP), 86–90 (DGTTT), Gly-413, 479–481 (DAL), and Asp-495 contribute to the ATP site.

This sequence belongs to the chaperonin (HSP60) family. In terms of assembly, forms a cylinder of 14 subunits composed of two heptameric rings stacked back-to-back. Interacts with the co-chaperonin GroES.

Its subcellular location is the cytoplasm. The catalysed reaction is ATP + H2O + a folded polypeptide = ADP + phosphate + an unfolded polypeptide.. In terms of biological role, together with its co-chaperonin GroES, plays an essential role in assisting protein folding. The GroEL-GroES system forms a nano-cage that allows encapsulation of the non-native substrate proteins and provides a physical environment optimized to promote and accelerate protein folding. In Thermotoga petrophila (strain ATCC BAA-488 / DSM 13995 / JCM 10881 / RKU-1), this protein is Chaperonin GroEL.